Reading from the N-terminus, the 868-residue chain is Sporulation-specific protein 75 (868 aa).

Residues 1 to 34 lie on the Extracellular side of the membrane; sequence MNATKELTFNLLNKFQDKERFGSAQRHAGISLKG. Residue asparagine 2 is glycosylated (N-linked (GlcNAc...) asparagine). Residues 35-55 traverse the membrane as a helical segment; that stretch reads FISGILFSFLYFLFQLSLFII. Residues 56 to 127 lie on the Cytoplasmic side of the membrane; it reads LRSRFKTIYQ…DNYLFLRFLK (72 aa). The helical transmembrane segment at 128-148 threads the bilayer; it reads LLIFFFAVLSIINIPILIPIH. Topologically, residues 149-187 are extracellular; that stretch reads YFSRDILKENEGERYEQSFRTTSKLDKWTMSNLSPNSSN. A glycan (N-linked (GlcNAc...) asparagine) is linked at asparagine 184. A helical transmembrane segment spans residues 188 to 208; it reads TLICHLFLSIFVVLWFHFILS. Over 209 to 481 the chain is Cytoplasmic; that stretch reads SELRFVNRLG…AKYFSANILR (273 aa). Residues 482 to 502 traverse the membrane as a helical segment; the sequence is IFVIIGWILPVAFLGLISQIP. A glycan (N-linked (GlcNAc...) asparagine) is linked at asparagine 503. At 503–527 the chain is on the extracellular side; it reads NISSLIPFTKIIHFQSPFIREVAKN. Residues 528 to 548 traverse the membrane as a helical segment; it reads LIPIVTLIIIIEIVPYFFRWL. Residues 549–569 lie on the Cytoplasmic side of the membrane; sequence SYLRGLKTGAQIEADVQNWYF. Residues 570 to 590 traverse the membrane as a helical segment; that stretch reads VFVFIHLFVVVTISSGFSIII. Over 591 to 611 the chain is Extracellular; the sequence is ERLLNNPVSIPALLANDLPKC. Residues 612 to 632 traverse the membrane as a helical segment; it reads ANFFCSFVLIRGMAYAGGNLL. Over 633–660 the chain is Cytoplasmic; sequence RIKELLFELFYYKWKRSTPHAQFKRLKT. A helical transmembrane segment spans residues 661 to 683; the sequence is SLFFQLGSIYPIFSVLGCIGIIY. Topologically, residues 684–692 are extracellular; that stretch reads SVVAPIILL. Residues 693–713 traverse the membrane as a helical segment; sequence LCCISFSMVFFSFSYLFKYQY. Residues 714–730 lie on the Cytoplasmic side of the membrane; that stretch reads NKENYSETFGKLYIQAL. Residues 731-751 traverse the membrane as a helical segment; that stretch reads MQLYAGIYFMEFCLLGLFTLF. The Extracellular segment spans residues 752–753; it reads DQ. Residues 754 to 774 form a helical membrane-spanning segment; the sequence is YTLSTIMLVVFALTVITHSKI. Over 775-868 the chain is Cytoplasmic; it reads SKQIKSKPQR…DCHLENSHLH (94 aa).

It belongs to the CSC1 (TC 1.A.17) family.

The protein localises to the membrane. Acts as an osmosensitive calcium-permeable cation channel. Required for spore wall assembly and ascus formation. The chain is Sporulation-specific protein 75 (SPO75) from Saccharomyces cerevisiae (strain ATCC 204508 / S288c) (Baker's yeast).